The following is a 129-amino-acid chain: Intraflagellar transport protein 20 homolog (129 aa).

Residues 89–121 (VLLQMTIRELTVEKERLRVELEAVRKIEKEQDE) adopt a coiled-coil conformation.

As to quaternary structure, component of the IFT complex B composed of at least che-2, che-13, dyf-1, dyf-3, dyf-6, dyf-11, dyf-13, ift-20, ift-74, ift-81, ifta-2, osm-1, osm-5 and osm-6.

The protein localises to the cell projection. It localises to the cilium. Functionally, component of the intraflagellar transport (IFT) complex B required for transport of proteins in the motile cilium. Required for ciliary entrance and transport of specific ciliary cargo proteins such as che-3 which are related to motility. The protein is Intraflagellar transport protein 20 homolog of Caenorhabditis elegans.